A 99-amino-acid chain; its full sequence is Ubiquitin-related modifier 1 homolog 2 (99 aa).

Position 99 is a 1-thioglycine (glycine 99). Glycine 99 participates in a covalent cross-link: Glycyl lysine isopeptide (Gly-Lys) (interchain with K-? in acceptor proteins).

It belongs to the URM1 family. In terms of processing, C-terminal thiocarboxylation occurs in 2 steps, it is first acyl-adenylated (-COAMP) via the hesA/moeB/thiF part of the MOCS3 homolog, then thiocarboxylated (-COSH) via the rhodanese domain of the MOCS3 homolog.

The protein localises to the cytoplasm. It participates in tRNA modification; 5-methoxycarbonylmethyl-2-thiouridine-tRNA biosynthesis. In terms of biological role, acts as a sulfur carrier required for 2-thiolation of mcm(5)S(2)U at tRNA wobble positions of cytosolic tRNA(Lys), tRNA(Glu) and tRNA(Gln). Serves as sulfur donor in tRNA 2-thiolation reaction by being thiocarboxylated (-COSH) at its C-terminus by MOCS3. The sulfur is then transferred to tRNA to form 2-thiolation of mcm(5)S(2)U. Also acts as a ubiquitin-like protein (UBL) that is covalently conjugated via an isopeptide bond to lysine residues of target proteins. The thiocarboxylated form serves as substrate for conjugation and oxidative stress specifically induces the formation of UBL-protein conjugates. This chain is Ubiquitin-related modifier 1 homolog 2, found in Arabidopsis thaliana (Mouse-ear cress).